Reading from the N-terminus, the 505-residue chain is Zinc finger protein 649 (505 aa).

The KRAB domain occupies 8–79 (LTLEDVAVDF…EDEIHSPAHP (72 aa)). Residue K112 forms a Glycyl lysine isopeptide (Lys-Gly) (interchain with G-Cter in SUMO2) linkage. C2H2-type zinc fingers lie at residues 178–200 (HECT…KRIH), 206–228 (HVCS…ERAH), 234–256 (HGCS…ERAH), 262–284 (YGCS…QRIH), 290–312 (HQCS…QRTH), 318–340 (HTCS…QRTH), 346–368 (YGCI…QRYH), 374–396 (FVCP…QKIH), 402–424 (YKCS…HRTH), and 430–452 (YGCD…KRIH). The interval 455-481 (EKRGDSVKVENPSTASHSLSPSEHVQG) is disordered. The span at 465–477 (NPSTASHSLSPSE) shows a compositional bias: polar residues.

This sequence belongs to the krueppel C2H2-type zinc-finger protein family. Highly expressed in heart, skeletal muscle, and brain. Lower expression in liver, lung, kidney, pancreas and placenta.

It is found in the nucleus. Transcriptional repressor. Regulator of transcriptional factor complexes and may suppress SRE and AP-1 transcription activities mediated by growth factor signaling pathways. The polypeptide is Zinc finger protein 649 (ZNF649) (Homo sapiens (Human)).